The following is a 227-amino-acid chain: NAD(P)H-quinone oxidoreductase subunit K, chloroplastic (227 aa).

[4Fe-4S] cluster contacts are provided by C43, C44, C108, and C139.

Belongs to the complex I 20 kDa subunit family. As to quaternary structure, NDH is composed of at least 16 different subunits, 5 of which are encoded in the nucleus. Requires [4Fe-4S] cluster as cofactor.

It is found in the plastid. Its subcellular location is the chloroplast thylakoid membrane. The catalysed reaction is a plastoquinone + NADH + (n+1) H(+)(in) = a plastoquinol + NAD(+) + n H(+)(out). It catalyses the reaction a plastoquinone + NADPH + (n+1) H(+)(in) = a plastoquinol + NADP(+) + n H(+)(out). Its function is as follows. NDH shuttles electrons from NAD(P)H:plastoquinone, via FMN and iron-sulfur (Fe-S) centers, to quinones in the photosynthetic chain and possibly in a chloroplast respiratory chain. The immediate electron acceptor for the enzyme in this species is believed to be plastoquinone. Couples the redox reaction to proton translocation, and thus conserves the redox energy in a proton gradient. This chain is NAD(P)H-quinone oxidoreductase subunit K, chloroplastic, found in Spinacia oleracea (Spinach).